Reading from the N-terminus, the 343-residue chain is Phenylalanine--tRNA ligase alpha subunit (343 aa).

Position 264 (E264) interacts with Mg(2+).

Belongs to the class-II aminoacyl-tRNA synthetase family. Phe-tRNA synthetase alpha subunit type 1 subfamily. In terms of assembly, tetramer of two alpha and two beta subunits. Mg(2+) is required as a cofactor.

It is found in the cytoplasm. It carries out the reaction tRNA(Phe) + L-phenylalanine + ATP = L-phenylalanyl-tRNA(Phe) + AMP + diphosphate + H(+). This chain is Phenylalanine--tRNA ligase alpha subunit, found in Aromatoleum aromaticum (strain DSM 19018 / LMG 30748 / EbN1) (Azoarcus sp. (strain EbN1)).